Consider the following 339-residue polypeptide: Dihydroorotate dehydrogenase (quinone) (339 aa).

Residues 62-66 (AGMDK) and threonine 86 contribute to the FMN site. Residue lysine 66 coordinates substrate. Position 111–115 (111–115 (NRMGF)) interacts with substrate. Residues asparagine 139 and asparagine 172 each contribute to the FMN site. Position 172 (asparagine 172) interacts with substrate. The active-site Nucleophile is serine 175. A substrate-binding site is contributed by asparagine 177. FMN is bound by residues lysine 217 and threonine 245. 246–247 (NT) lines the substrate pocket. FMN contacts are provided by residues glycine 268, glycine 297, and 318 to 319 (YS).

The protein belongs to the dihydroorotate dehydrogenase family. Type 2 subfamily. In terms of assembly, monomer. FMN is required as a cofactor.

Its subcellular location is the cell membrane. It carries out the reaction (S)-dihydroorotate + a quinone = orotate + a quinol. It participates in pyrimidine metabolism; UMP biosynthesis via de novo pathway; orotate from (S)-dihydroorotate (quinone route): step 1/1. Catalyzes the conversion of dihydroorotate to orotate with quinone as electron acceptor. The chain is Dihydroorotate dehydrogenase (quinone) from Shewanella baltica (strain OS155 / ATCC BAA-1091).